A 103-amino-acid polypeptide reads, in one-letter code: Small ribosomal subunit protein uS10 (103 aa).

Belongs to the universal ribosomal protein uS10 family. Part of the 30S ribosomal subunit.

In terms of biological role, involved in the binding of tRNA to the ribosomes. The polypeptide is Small ribosomal subunit protein uS10 (Desulfatibacillum aliphaticivorans).